We begin with the raw amino-acid sequence, 68 residues long: Copper transport protein ATOX1 (68 aa).

An HMA domain is found at 1–63; it reads MPKHEFSVDM…TLGKTGKAVS (63 aa). Cu cation is bound by residues Cys-12 and Cys-15. Ser-47 is subject to Phosphoserine. N6-acetyllysine is present on Lys-60.

This sequence belongs to the ATX1 family. In terms of assembly, homodimer. Interacts with ATP7B. Interacts with ATP7A. Interacts (via dimer form) with SLC31A1 (via C-terminal domain); this interaction improves ATOX1 stability and controls intracellular Cu(I) levels.

Its function is as follows. Binds and deliver cytosolic copper to the copper ATPase proteins. May be important in cellular antioxidant defense. In Bos taurus (Bovine), this protein is Copper transport protein ATOX1.